A 562-amino-acid polypeptide reads, in one-letter code: Phosphopantothenoylcysteine decarboxylase subunit SIS2 (562 aa).

The span at 1-10 shows a compositional bias: polar residues; it reads MTAVASTSGK. 3 disordered regions span residues 1–63, 97–165, and 490–562; these read MTAV…SNAT, FSDL…KDYD, and GYPK…DKHQ. The segment covering 27–42 has biased composition (basic and acidic residues); the sequence is GQKEILLDHEDAKGKD. Polar residues-rich tracts occupy residues 44 to 63 and 99 to 113; these read IINSPVSGRQSISPTLSNAT and DLKQQQKQDSLTQLK. A phosphoserine mark is found at serine 47, serine 50, serine 54, and serine 56. The span at 121-134 shows a compositional bias: low complexity; the sequence is SPNSNPAPVSNSIP. Positions 142–156 are enriched in polar residues; the sequence is NHTNTSRTTQLSGSP. Serine 155 carries the post-translational modification Phosphoserine. Positions 496–553 are enriched in acidic residues; that stretch reads EEEDDDEDEEEDDDEEEDTEDKNENNNDDDDDDDDDDDDDDDDDDDDDDDDEDEDEAE.

This sequence belongs to the HFCD (homooligomeric flavin containing Cys decarboxylase) superfamily. Interacts with the C-terminal domain of PPZ1. Component of the phosphopantothenoylcysteine decarboxylase (PPCDC) complex, a heterotrimer composed of CAB3, SIS2 and VHS3.

It localises to the nucleus. It is found in the cytoplasm. In terms of biological role, component of the phosphopantothenoylcysteine decarboxylase (PPCDC) involved in the coenzyme A synthesis. Acts as an inhibitory subunit of protein phosphatase PPZ1, which is involved in many cellular processes such as G1-S transition or salt tolerance. Also modulates the expression of the ENA1 ATPase. This chain is Phosphopantothenoylcysteine decarboxylase subunit SIS2 (SIS2), found in Saccharomyces cerevisiae (strain ATCC 204508 / S288c) (Baker's yeast).